We begin with the raw amino-acid sequence, 268 residues long: Ribosomal RNA small subunit methyltransferase A (268 aa).

S-adenosyl-L-methionine is bound by residues Asn-18, Leu-20, Gly-45, Glu-66, Asp-91, and Asn-112.

Belongs to the class I-like SAM-binding methyltransferase superfamily. rRNA adenine N(6)-methyltransferase family. RsmA subfamily.

The protein resides in the cytoplasm. It carries out the reaction adenosine(1518)/adenosine(1519) in 16S rRNA + 4 S-adenosyl-L-methionine = N(6)-dimethyladenosine(1518)/N(6)-dimethyladenosine(1519) in 16S rRNA + 4 S-adenosyl-L-homocysteine + 4 H(+). Its function is as follows. Specifically dimethylates two adjacent adenosines (A1518 and A1519) in the loop of a conserved hairpin near the 3'-end of 16S rRNA in the 30S particle. May play a critical role in biogenesis of 30S subunits. This Shewanella baltica (strain OS223) protein is Ribosomal RNA small subunit methyltransferase A.